The following is a 470-amino-acid chain: ATP synthase subunit beta (470 aa).

155 to 162 is a binding site for ATP; the sequence is GGAGVGKT.

It belongs to the ATPase alpha/beta chains family. In terms of assembly, F-type ATPases have 2 components, CF(1) - the catalytic core - and CF(0) - the membrane proton channel. CF(1) has five subunits: alpha(3), beta(3), gamma(1), delta(1), epsilon(1). CF(0) has three main subunits: a(1), b(2) and c(9-12). The alpha and beta chains form an alternating ring which encloses part of the gamma chain. CF(1) is attached to CF(0) by a central stalk formed by the gamma and epsilon chains, while a peripheral stalk is formed by the delta and b chains.

The protein resides in the cell membrane. The catalysed reaction is ATP + H2O + 4 H(+)(in) = ADP + phosphate + 5 H(+)(out). Its function is as follows. Produces ATP from ADP in the presence of a proton gradient across the membrane. The catalytic sites are hosted primarily by the beta subunits. The protein is ATP synthase subunit beta of Staphylococcus aureus (strain MW2).